Consider the following 421-residue polypeptide: UDP-N-acetylglucosamine 1-carboxyvinyltransferase (421 aa).

22-23 (KN) contacts phosphoenolpyruvate. Arginine 93 lines the UDP-N-acetyl-alpha-D-glucosamine pocket. The active-site Proton donor is the cysteine 117. Position 117 is a 2-(S-cysteinyl)pyruvic acid O-phosphothioketal (cysteine 117). Residues 122–126 (RPVDL), aspartate 308, and valine 330 each bind UDP-N-acetyl-alpha-D-glucosamine.

This sequence belongs to the EPSP synthase family. MurA subfamily.

Its subcellular location is the cytoplasm. It carries out the reaction phosphoenolpyruvate + UDP-N-acetyl-alpha-D-glucosamine = UDP-N-acetyl-3-O-(1-carboxyvinyl)-alpha-D-glucosamine + phosphate. It participates in cell wall biogenesis; peptidoglycan biosynthesis. Cell wall formation. Adds enolpyruvyl to UDP-N-acetylglucosamine. This chain is UDP-N-acetylglucosamine 1-carboxyvinyltransferase, found in Ectopseudomonas mendocina (strain ymp) (Pseudomonas mendocina).